Reading from the N-terminus, the 380-residue chain is Dynactin subunit 2 (380 aa).

The interval 1 to 32 (MADPKFQNLPGIAYDQPDVYETPDDPELDTSD) is disordered. Residues 21–32 (ETPDDPELDTSD) show a composition bias toward acidic residues. A phosphoserine mark is found at serine 49, serine 58, and serine 86. Coiled coils occupy residues 100–135 (VQKC…QSYD) and 353–377 (ETFA…AAIS).

It belongs to the dynactin subunit 2 family. In terms of assembly, subunit of dynactin, a multiprotein complex associated with dynein.

The protein localises to the cytoplasm. It localises to the cytoskeleton. It is found in the membrane. In terms of biological role, modulates cytoplasmic dynein binding to an organelle, and plays a role in prometaphase chromosome alignment and spindle organization during mitosis. May play a role in synapse formation during brain development. This chain is Dynactin subunit 2, found in Drosophila melanogaster (Fruit fly).